A 175-amino-acid chain; its full sequence is MGSEVCRVFLIGGRASGKSTVGRALAARLGWDFADTDAMVTRRAGCDIATLVAERGWDAFRDMESDALRDAAARERVVVATGGGMVLRAENRALLREAGVTVFLSLPVEVVAARLARNPEHGQRPSLTGKAVADEVADVMRERAPLYAEAARHVVRGDAPVACIVEDITALLAFS.

Residue 12–19 participates in ATP binding; sequence GGRASGKS.

The protein belongs to the shikimate kinase family.

The protein resides in the cytoplasm. It carries out the reaction shikimate + ATP = 3-phosphoshikimate + ADP + H(+). Its pathway is metabolic intermediate biosynthesis; chorismate biosynthesis; chorismate from D-erythrose 4-phosphate and phosphoenolpyruvate: step 5/7. This Nitratidesulfovibrio vulgaris (strain ATCC 29579 / DSM 644 / CCUG 34227 / NCIMB 8303 / VKM B-1760 / Hildenborough) (Desulfovibrio vulgaris) protein is Shikimate kinase.